Reading from the N-terminus, the 832-residue chain is Protein P (832 aa).

The segment at 1–177 (MPLSYQHFRR…FCGSPYSWEQ (177 aa)) is terminal protein domain (TP). The interval 178-335 (DLQHGAESIH…YCLSLIVNLL (158 aa)) is spacer. Disordered stretches follow at residues 186 to 218 (IHQQ…QSQQ) and 239 to 266 (TARR…SCLY). The tract at residues 336 to 679 (EDWGPCDEYG…YLNLYPVARQ (344 aa)) is polymerase/reverse transcriptase domain (RT). Positions 346 to 589 (EHHIRIPRTP…YSLHFMGYVI (244 aa)) constitute a Reverse transcriptase domain. 3 residues coordinate Mg(2+): D418, D540, and D541.

It belongs to the hepadnaviridae P protein family.

It carries out the reaction DNA(n) + a 2'-deoxyribonucleoside 5'-triphosphate = DNA(n+1) + diphosphate. The catalysed reaction is Endonucleolytic cleavage to 5'-phosphomonoester.. With respect to regulation, activated by host HSP70 and HSP40 in vitro to be able to bind the epsilon loop of the pgRNA. Because deletion of the RNase H region renders the protein partly chaperone-independent, the chaperones may be needed indirectly to relieve occlusion of the RNA-binding site by this domain. Inhibited by several reverse-transcriptase inhibitors: Lamivudine, Adefovir and Entecavir. In terms of biological role, multifunctional enzyme that converts the viral RNA genome into dsDNA in viral cytoplasmic capsids. This enzyme displays a DNA polymerase activity that can copy either DNA or RNA templates, and a ribonuclease H (RNase H) activity that cleaves the RNA strand of RNA-DNA heteroduplexes in a partially processive 3'- to 5'-endonucleasic mode. Neo-synthesized pregenomic RNA (pgRNA) are encapsidated together with the P protein, and reverse-transcribed inside the nucleocapsid. Initiation of reverse-transcription occurs first by binding the epsilon loop on the pgRNA genome, and is initiated by protein priming, thereby the 5'-end of (-)DNA is covalently linked to P protein. Partial (+)DNA is synthesized from the (-)DNA template and generates the relaxed circular DNA (RC-DNA) genome. After budding and infection, the RC-DNA migrates in the nucleus, and is converted into a plasmid-like covalently closed circular DNA (cccDNA). The activity of P protein does not seem to be necessary for cccDNA generation, and is presumably released from (+)DNA by host nuclear DNA repair machinery. This is Protein P from Homo sapiens (Human).